The sequence spans 929 residues: Lon protease homolog 2, peroxisomal (929 aa).

The Lon N-terminal domain occupies 11–257; that stretch reads LPLVPLPKGS…RVVEILTRQL (247 aa). The interval 302-325 is disordered; it reads GLTPPGLSAGRNNDNDDKESNEVD. An ATP-binding site is contributed by 484 to 491; it reads GPPGVGKT. The Lon proteolytic domain maps to 727–914; that stretch reads HGRPGVVTGL…WEAIRQVWPD (188 aa). Catalysis depends on residues serine 820 and lysine 863. The Microbody targeting signal signature appears at 927–929; sequence SRL.

Belongs to the peptidase S16 family.

The protein localises to the peroxisome matrix. The catalysed reaction is Hydrolysis of proteins in presence of ATP.. ATP-dependent serine protease that mediates the selective degradation of misfolded and unassembled polypeptides in the peroxisomal matrix. Necessary for type 2 peroxisome targeting signal (PTS2)-containing protein processing and facilitates peroxisome matrix protein import. The sequence is that of Lon protease homolog 2, peroxisomal from Aspergillus niger (strain ATCC MYA-4892 / CBS 513.88 / FGSC A1513).